The following is a 784-amino-acid chain: Copal-8-ol diphosphate hydratase TPSSA9, chloroplastic (784 aa).

Arginine 240 contacts substrate. Residues aspartate 372 and aspartate 374 each coordinate Mg(2+). The short motif at 372-375 (DIDD) is the DXDD motif element. Arginine 459 is a binding site for substrate.

Belongs to the terpene synthase family.

It localises to the plastid. Its subcellular location is the chloroplast. It carries out the reaction (2E,6E,10E)-geranylgeranyl diphosphate + H2O = 8-hydroxycopalyl diphosphate. It participates in secondary metabolite biosynthesis; terpenoid biosynthesis. Functionally, involved in the biosynthesis of labdane-type diterpenoid including sclareol, a diterpene-diol that is used as fragrance and flavoring, and has anticancer effects (able to kill leukemic and colon cancer cells by apoptosis). Sclareol can also be used as synthesis precursor of ambergris substitution fragance products such as ambrox. Terpene synthase that produces 8-hydroxycopalyl diphosphate from geranylgeranyl diphosphate (GGPP). The chain is Copal-8-ol diphosphate hydratase TPSSA9, chloroplastic from Salvia sclarea (Clary sage).